A 304-amino-acid polypeptide reads, in one-letter code: dTDP-4-dehydrorhamnose reductase (304 aa).

NADH is bound by residues 15–17 (GQL), 41–42 (DI), and 63–65 (AYT). Residues 16–17 (QL), 41–42 (DI), and 63–65 (AYT) each bind NADPH. 104-105 (TD) is a dTDP-beta-L-rhamnose binding site. NADH is bound by residues Y132 and K136. Residues Y132 and K136 each contribute to the NADPH site. Y132 acts as the Proton donor/acceptor in catalysis. W157 is a binding site for dTDP-beta-L-rhamnose.

It belongs to the dTDP-4-dehydrorhamnose reductase family. Mg(2+) serves as cofactor.

It carries out the reaction dTDP-beta-L-rhamnose + NADP(+) = dTDP-4-dehydro-beta-L-rhamnose + NADPH + H(+). The protein operates within carbohydrate biosynthesis; dTDP-L-rhamnose biosynthesis. Involved in the biosynthesis of the dTDP-L-rhamnose which is a component of the critical linker, D-N-acetylglucosamine-L-rhamnose disaccharide, which connects the galactan region of arabinogalactan to peptidoglycan via a phosphodiester linkage. Catalyzes the reduction of dTDP-6-deoxy-L-lyxo-4-hexulose to yield dTDP-L-rhamnose. The chain is dTDP-4-dehydrorhamnose reductase from Mycobacterium tuberculosis (strain CDC 1551 / Oshkosh).